A 428-amino-acid polypeptide reads, in one-letter code: Light-independent protochlorophyllide reductase subunit N (428 aa).

The [4Fe-4S] cluster site is built by C29, C54, and C115.

Belongs to the BchN/ChlN family. Protochlorophyllide reductase is composed of three subunits; BchL, BchN and BchB. Forms a heterotetramer of two BchB and two BchN subunits. The cofactor is [4Fe-4S] cluster.

The enzyme catalyses chlorophyllide a + oxidized 2[4Fe-4S]-[ferredoxin] + 2 ADP + 2 phosphate = protochlorophyllide a + reduced 2[4Fe-4S]-[ferredoxin] + 2 ATP + 2 H2O. It participates in porphyrin-containing compound metabolism; bacteriochlorophyll biosynthesis (light-independent). Component of the dark-operative protochlorophyllide reductase (DPOR) that uses Mg-ATP and reduced ferredoxin to reduce ring D of protochlorophyllide (Pchlide) to form chlorophyllide a (Chlide). This reaction is light-independent. The NB-protein (BchN-BchB) is the catalytic component of the complex. The polypeptide is Light-independent protochlorophyllide reductase subunit N (Cereibacter sphaeroides (strain ATCC 17029 / ATH 2.4.9) (Rhodobacter sphaeroides)).